The primary structure comprises 262 residues: Glucosamine-6-phosphate deaminase (262 aa).

The active-site Proton acceptor; for enolization step is Asp63. Residue Asn129 is the For ring-opening step of the active site. The Proton acceptor; for ring-opening step role is filled by His131. Glu136 functions as the For ring-opening step in the catalytic mechanism.

This sequence belongs to the glucosamine/galactosamine-6-phosphate isomerase family. NagB subfamily.

It carries out the reaction alpha-D-glucosamine 6-phosphate + H2O = beta-D-fructose 6-phosphate + NH4(+). It functions in the pathway amino-sugar metabolism; N-acetylneuraminate degradation; D-fructose 6-phosphate from N-acetylneuraminate: step 5/5. Catalyzes the reversible isomerization-deamination of glucosamine 6-phosphate (GlcN6P) to form fructose 6-phosphate (Fru6P) and ammonium ion. The protein is Glucosamine-6-phosphate deaminase of Bacillus cereus (strain G9842).